Consider the following 852-residue polypeptide: Translation initiation factor IF-2 (852 aa).

The tract at residues 1–240 (MEDKNKTIKE…KTSSDKRDFS (240 aa)) is disordered. The span at 78–90 (KEVKYEESSRKQD) shows a compositional bias: basic and acidic residues. Over residues 106-120 (VRPSGDSSYPVSRSP) the composition is skewed to polar residues. Residues 150-200 (RGPGQGGGYQGNRGPGQGGGYQGNRGPGQQTGPGNRFGGSGPGNRSGGPGG) show a composition bias toward gly residues. Positions 227–240 (HDKEKTSSDKRDFS) are enriched in basic and acidic residues. The region spanning 347-516 (NRPPVVTIMG…LLQAEVMDLK (170 aa)) is the tr-type G domain. Residues 356 to 363 (GHVDHGKT) form a G1 region. 356–363 (GHVDHGKT) lines the GTP pocket. Positions 381-385 (GITQH) are G2. The G3 stretch occupies residues 402–405 (DTPG). Residues 402-406 (DTPGH) and 456-459 (NKID) each bind GTP. The interval 456 to 459 (NKID) is G4. Positions 492-494 (SAR) are G5.

The protein belongs to the TRAFAC class translation factor GTPase superfamily. Classic translation factor GTPase family. IF-2 subfamily.

The protein localises to the cytoplasm. One of the essential components for the initiation of protein synthesis. Protects formylmethionyl-tRNA from spontaneous hydrolysis and promotes its binding to the 30S ribosomal subunits. Also involved in the hydrolysis of GTP during the formation of the 70S ribosomal complex. This is Translation initiation factor IF-2 from Leptospira borgpetersenii serovar Hardjo-bovis (strain JB197).